The chain runs to 72 residues: Large ribosomal subunit protein uL29 (72 aa).

It belongs to the universal ribosomal protein uL29 family.

The protein is Large ribosomal subunit protein uL29 of Chlamydia abortus (strain DSM 27085 / S26/3) (Chlamydophila abortus).